Reading from the N-terminus, the 331-residue chain is Geranylgeranyl transferase type-2 subunit beta (331 aa).

An N-acetylglycine modification is found at Gly2. Thr3 carries the post-translational modification Phosphothreonine. PFTB repeat units lie at residues 20–61 (LEKH…DLMG), 68–109 (REEI…TLYD), 116–157 (VNKV…ALLG), 164–205 (VEKA…AITS), 212–253 (SDLL…KIIG), and 260–302 (REKL…SLLG). 190–192 (HAG) provides a ligand contact to geranylgeranyl diphosphate. Residues Asp238 and Cys240 each coordinate Zn(2+). 241–244 (YSWW) is a binding site for geranylgeranyl diphosphate. His290 lines the Zn(2+) pocket.

Belongs to the protein prenyltransferase subunit beta family. In terms of assembly, heterotrimer composed of RABGGTA, RABGGTB and CHM; within this trimer, RABGGTA and RABGGTB form the catalytic component B, while CHM (component A) mediates peptide substrate binding. The Rab GGTase dimer (RGGT) interacts with CHM (component A) prior to Rab protein binding; the association is stabilized by geranylgeranyl pyrophosphate (GGpp). The CHM:RGGT:Rab complex is destabilized by GGpp. Interaction of RABGGTB with prenylated PTP4A2 precludes its association with RABGGTA and inhibits enzyme activity. Interacts with CHODL. Interacts with non-phosphorylated form of RAB8A; phosphorylation of RAB8A at 'Thr-72' disrupts this interaction. Zn(2+) serves as cofactor.

It catalyses the reaction geranylgeranyl diphosphate + L-cysteinyl-[protein] = S-geranylgeranyl-L-cysteinyl-[protein] + diphosphate. Its activity is regulated as follows. The enzymatic reaction requires the aid of a Rab escort protein (also called component A). Its function is as follows. Catalyzes the transfer of a geranylgeranyl moiety from geranylgeranyl diphosphate to both cysteines of Rab proteins with the C-terminal sequence -XXCC, -XCXC and -CCXX, such as RAB1A, RAB3A, RAB5A and RAB7A. The protein is Geranylgeranyl transferase type-2 subunit beta (RABGGTB) of Homo sapiens (Human).